The chain runs to 114 residues: PDZK1-interacting protein 1 (114 aa).

Topologically, residues 1–28 (MSVLSLVVLSLLMALPPASCQQGRGNLQ) are extracellular. Residues 29 to 51 (PWMQGLIAVAVFLVLVAIAFAVN) form a helical membrane-spanning segment. Residues 52–114 (HFWCQEKPAP…EEGKVCSTPM (63 aa)) lie on the Cytoplasmic side of the membrane. Phosphoserine is present on Ser85.

This sequence belongs to the PDZK1-interacting protein 1/SMIM24 family. As to quaternary structure, forms a heterodimer (via N-terminal transmembrane helix) with SLC5A2/SGLT2 (via TM13); this interaction enhances SLC5A2 transporter activity. Interacts with PDZK1.

It is found in the apical cell membrane. In terms of biological role, auxiliary protein of electrogenic Na(+)-coupled sugar symporter SLC5A2/SGLT2 and SLC5A1/SGLT1. Essential for the transporter activity of SLC5A2/SGLT2 but not SLC5A1/SGLT1. This is PDZK1-interacting protein 1 from Bos taurus (Bovine).